The primary structure comprises 179 residues: Alpha-tubulin N-acetyltransferase (179 aa).

The region spanning 1–175 (MRVEVVRAPG…NRFVVFDAYF (175 aa)) is the N-acetyltransferase domain. Acetyl-CoA is bound by residues 109-122 (FYVDEVWQRRGVGL) and 145-154 (SPKLFAFLKK).

This sequence belongs to the acetyltransferase ATAT1 family.

The enzyme catalyses L-lysyl-[alpha-tubulin] + acetyl-CoA = N(6)-acetyl-L-lysyl-[alpha-tubulin] + CoA + H(+). Functionally, specifically acetylates 'Lys-40' in alpha-tubulin on the lumenal side of microtubules. Promotes microtubule destabilization and accelerates microtubule dynamics; this activity may be independent of acetylation activity. Acetylates alpha-tubulin with a slow enzymatic rate, due to a catalytic site that is not optimized for acetyl transfer. Enters the microtubule through each end and diffuses quickly throughout the lumen of microtubules. Acetylates only long/old microtubules because of its slow acetylation rate since it does not have time to act on dynamically unstable microtubules before the enzyme is released. In Phytophthora infestans (strain T30-4) (Potato late blight agent), this protein is Alpha-tubulin N-acetyltransferase.